The following is a 210-amino-acid chain: Transcriptional regulator DauR (210 aa).

The protein belongs to the DauR family.

In terms of biological role, dauR represses the dauBAR operon. The sequence is that of Transcriptional regulator DauR from Pseudomonas aeruginosa (strain ATCC 15692 / DSM 22644 / CIP 104116 / JCM 14847 / LMG 12228 / 1C / PRS 101 / PAO1).